The following is a 620-amino-acid chain: Two-component response regulator ORR27 (620 aa).

The region spanning 24–138 (HVLVVDDDAA…AIKFIWKHVL (115 aa)) is the Response regulatory domain. 4-aspartylphosphate is present on D76. Disordered stretches follow at residues 171 to 197 (PPAVQLPAAPAQAGNRDGEAHEEAELS) and 215 to 257 (VWSS…LEAT). The segment at residues 261 to 321 (KKVRTRFTWT…HLQKYRSWLE (61 aa)) is a DNA-binding region (myb-like GARP). Over residues 431–456 (SVSRDAHENGNSQARGSAMSNGTSGT) the composition is skewed to polar residues. Disordered regions lie at residues 431-457 (SVSRDAHENGNSQARGSAMSNGTSGTR), 501-523 (SDQNPGTSHPTSSSAINNQNSKT), and 596-620 (PPRGLNNEIASHENTNGKNGASSGP). Polar residues predominate over residues 603–620 (EIASHENTNGKNGASSGP).

The protein belongs to the ARR family. Type-B subfamily. Post-translationally, two-component system major event consists of a His-to-Asp phosphorelay between a sensor histidine kinase (HK) and a response regulator (RR). In plants, the His-to-Asp phosphorelay involves an additional intermediate named Histidine-containing phosphotransfer protein (HPt). This multistep phosphorelay consists of a His-Asp-His-Asp sequential transfer of a phosphate group between first a His and an Asp of the HK protein, followed by the transfer to a conserved His of the HPt protein and finally the transfer to an Asp in the receiver domain of the RR protein.

Its subcellular location is the nucleus. Functionally, transcriptional activator that binds specific DNA sequence. Functions as a response regulator involved in His-to-Asp phosphorelay signal transduction system. Phosphorylation of the Asp residue in the receiver domain activates the ability of the protein to promote the transcription of target genes. May directly activate some type-A response regulators in response to cytokinins. The chain is Two-component response regulator ORR27 from Oryza sativa subsp. japonica (Rice).